We begin with the raw amino-acid sequence, 88 residues long: Sec-independent protein translocase protein TatA (88 aa).

Residues 1–21 (MNLGPTEILLILVIVVLLFGA) traverse the membrane as a helical segment. Residues 46 to 56 (SNDDQRYEEQQ) are compositionally biased toward basic and acidic residues. The disordered stretch occupies residues 46–88 (SNDDQRYEEQQQQRQIAAQAQQQVVNPVEIPQPQPTDIQRPQQ). The segment covering 57 to 68 (QQRQIAAQAQQQ) has biased composition (low complexity).

Belongs to the TatA/E family. As to quaternary structure, the Tat system comprises two distinct complexes: a TatABC complex, containing multiple copies of TatA, TatB and TatC subunits, and a separate TatA complex, containing only TatA subunits. Substrates initially bind to the TatABC complex, which probably triggers association of the separate TatA complex to form the active translocon.

The protein localises to the cell membrane. Part of the twin-arginine translocation (Tat) system that transports large folded proteins containing a characteristic twin-arginine motif in their signal peptide across membranes. TatA could form the protein-conducting channel of the Tat system. The polypeptide is Sec-independent protein translocase protein TatA (Corynebacterium diphtheriae (strain ATCC 700971 / NCTC 13129 / Biotype gravis)).